Consider the following 399-residue polypeptide: Dual-specificity RNA methyltransferase RlmN (399 aa).

The active-site Proton acceptor is the Glu-122. Residues 128–371 (ETDRGTLCVS…VRTPRGRDIL (244 aa)) form the Radical SAM core domain. Cysteines 135 and 374 form a disulfide. [4Fe-4S] cluster-binding residues include Cys-142, Cys-146, and Cys-149. Residues 200–201 (GE), Ser-232, 254–256 (SLH), and Asn-331 contribute to the S-adenosyl-L-methionine site. Cys-374 (S-methylcysteine intermediate) is an active-site residue.

The protein belongs to the radical SAM superfamily. RlmN family. [4Fe-4S] cluster is required as a cofactor.

It is found in the cytoplasm. The catalysed reaction is adenosine(2503) in 23S rRNA + 2 reduced [2Fe-2S]-[ferredoxin] + 2 S-adenosyl-L-methionine = 2-methyladenosine(2503) in 23S rRNA + 5'-deoxyadenosine + L-methionine + 2 oxidized [2Fe-2S]-[ferredoxin] + S-adenosyl-L-homocysteine. It carries out the reaction adenosine(37) in tRNA + 2 reduced [2Fe-2S]-[ferredoxin] + 2 S-adenosyl-L-methionine = 2-methyladenosine(37) in tRNA + 5'-deoxyadenosine + L-methionine + 2 oxidized [2Fe-2S]-[ferredoxin] + S-adenosyl-L-homocysteine. Functionally, specifically methylates position 2 of adenine 2503 in 23S rRNA and position 2 of adenine 37 in tRNAs. m2A2503 modification seems to play a crucial role in the proofreading step occurring at the peptidyl transferase center and thus would serve to optimize ribosomal fidelity. In Rhodopseudomonas palustris (strain TIE-1), this protein is Dual-specificity RNA methyltransferase RlmN.